A 108-amino-acid chain; its full sequence is Ig kappa chain V region BS-5 (108 aa).

The interval 1–23 is framework-1; it reads DVVMTQTPASVSEPVGGTVTIKC. Disulfide bonds link C23-C88 and C80-G108. Positions 24-34 are complementarity-determining-1; sequence QASQSIYSNLA. The tract at residues 35-49 is framework-2; that stretch reads WYQZKPGQPPKLLIY. The interval 50–56 is complementarity-determining-2; the sequence is KASTLES. The tract at residues 57–88 is framework-3; it reads GVPSRFKGSGSGTDFTLTISDLECADAATYFC. The tract at residues 89–97 is complementarity-determining-3; the sequence is QGSBYTGTV. Positions 98–107 are framework-4; the sequence is FGGGTEVVVK.

The protein is Ig kappa chain V region BS-5 of Oryctolagus cuniculus (Rabbit).